The sequence spans 134 residues: UPF0412 protein YaaI (134 aa).

The signal sequence occupies residues 1-23 (MRSVLTISASLLFGLALSSVAHA).

This sequence belongs to the UPF0412 family.

The polypeptide is UPF0412 protein YaaI (Salmonella paratyphi B (strain ATCC BAA-1250 / SPB7)).